Here is a 282-residue protein sequence, read N- to C-terminus: Elongation factor Ts (282 aa).

An involved in Mg(2+) ion dislocation from EF-Tu region spans residues 81–84 (TDFV). Residues 218-270 (KPAQPAQVAEVAAAPPAEPVADQPAAEPPAESVAPEPVVAESADAEPAPAAEG) show a composition bias toward low complexity. The tract at residues 218–282 (KPAQPAQVAE…SKKGSTKKKK (65 aa)) is disordered. Positions 273–282 (SKKGSTKKKK) are enriched in basic residues.

The protein belongs to the EF-Ts family.

The protein resides in the cytoplasm. Associates with the EF-Tu.GDP complex and induces the exchange of GDP to GTP. It remains bound to the aminoacyl-tRNA.EF-Tu.GTP complex up to the GTP hydrolysis stage on the ribosome. This chain is Elongation factor Ts, found in Synechococcus sp. (strain JA-3-3Ab) (Cyanobacteria bacterium Yellowstone A-Prime).